The primary structure comprises 116 residues: Small ribosomal subunit protein uS11m (116 aa).

It belongs to the universal ribosomal protein uS11 family.

It is found in the mitochondrion. The sequence is that of Small ribosomal subunit protein uS11m (RPS11) from Chondrus crispus (Carrageen Irish moss).